The following is a 314-amino-acid chain: Protein phosphatase PTC7 homolog fig (314 aa).

Positions 43 to 309 (PYLVTVVQGR…DDITLILSSV (267 aa)) constitute a PPM-type phosphatase domain. 3 residues coordinate Mn(2+): Asp87, Gly88, and Asp232.

Belongs to the PP2C family. It depends on Mg(2+) as a cofactor. Requires Mn(2+) as cofactor.

It catalyses the reaction O-phospho-L-seryl-[protein] + H2O = L-seryl-[protein] + phosphate. It carries out the reaction O-phospho-L-threonyl-[protein] + H2O = L-threonyl-[protein] + phosphate. This is Protein phosphatase PTC7 homolog fig from Drosophila melanogaster (Fruit fly).